Consider the following 104-residue polypeptide: UPF0235 protein M446_3939 (104 aa).

This sequence belongs to the UPF0235 family.

The sequence is that of UPF0235 protein M446_3939 from Methylobacterium sp. (strain 4-46).